The sequence spans 397 residues: MKFNKVKLVIHACVLLFIIISIALIFHRLQTKTHSIDPIHKETKLSDNEKYLVDRNKEKVAPSKLKEVYNSKDPKYKKIDKYLQSSLFNGSVAIYENGKLKMSKGYGYQDFEKGIKNTPNTMFLIGSAQKFSTGLLLKQLEEEHKININDPVSKYLPWFKTSKPIPLKDLMLHQSGLYKYKSSKDYKNLDQAVKAIQKRGIDPKKYKKHMYNDGNYLVLAKVIEEVTGKSYAENYYTKIGDPLKLQHTAFYDEQPFKKYLAKGYAYNSTGLSFLRPNILDQYYGAGNLYMTPTDMGKLITQIQQYKLFSPKITNPLLHEFGTKKYPDEYRYGFYAKPTLNRLNGGFFGQVFTVYYNDKYVVVLALNVKGNNEVRIKHIYNDILKQNKPYNTKGVIVQ.

The first 23 residues, 1 to 23 (MKFNKVKLVIHACVLLFIIISIA), serve as a signal peptide directing secretion.

It localises to the cell membrane. It catalyses the reaction [(4-D-Ala)-(2-GlcNAc)-Rib-ol-P]n-[Gro-P]m-beta-D-ManNAc-(1-&gt;4)-alpha-D-GlcNAc-P-peptidoglycan + n H2O = [(2-GlcNAc)-Rib-ol-P]n-[Gro-P]m-beta-D-ManNAc-(1-&gt;4)-alpha-D-GlcNAc-P-peptidoglycan + n D-alanine.. Functionally, catalyzes the liberation of D-alanyl moieties present on wall teichoic acid (WTA) and lipoteichoic acid (LTA). Affects the methicillin resistance level and autolysis in the presence of Triton X-100 as well as the cell wall structure. This Staphylococcus aureus (strain NCTC 8325 / PS 47) protein is Teichoic acid D-alanine hydrolase (fmtA).